The primary structure comprises 311 residues: Malate dehydrogenase (311 aa).

Residues 7 to 13 and aspartate 34 contribute to the NAD(+) site; that span reads GAAGGIG. Residues arginine 81 and arginine 87 each coordinate substrate. NAD(+) is bound by residues asparagine 94 and 117–119; that span reads ITN. Substrate contacts are provided by asparagine 119 and arginine 153. Histidine 177 serves as the catalytic Proton acceptor. Methionine 227 lines the NAD(+) pocket.

It belongs to the LDH/MDH superfamily. MDH type 1 family. As to quaternary structure, homodimer.

It catalyses the reaction (S)-malate + NAD(+) = oxaloacetate + NADH + H(+). Functionally, catalyzes the reversible oxidation of malate to oxaloacetate. The sequence is that of Malate dehydrogenase (mdh) from Vibrio cholerae serotype O1 (strain ATCC 39315 / El Tor Inaba N16961).